The chain runs to 101 residues: CRISPR-associated endoribonuclease Cas2 (101 aa).

Asp8 provides a ligand contact to Mg(2+).

This sequence belongs to the CRISPR-associated endoribonuclease Cas2 protein family. Homodimer, forms a heterotetramer with a Cas1 homodimer. Requires Mg(2+) as cofactor.

In terms of biological role, CRISPR (clustered regularly interspaced short palindromic repeat), is an adaptive immune system that provides protection against mobile genetic elements (viruses, transposable elements and conjugative plasmids). CRISPR clusters contain sequences complementary to antecedent mobile elements and target invading nucleic acids. CRISPR clusters are transcribed and processed into CRISPR RNA (crRNA). Functions as a ssRNA-specific endoribonuclease. Involved in the integration of spacer DNA into the CRISPR cassette. In Ligilactobacillus salivarius (strain UCC118) (Lactobacillus salivarius), this protein is CRISPR-associated endoribonuclease Cas2.